The primary structure comprises 377 residues: Nitric oxide reductase FlRd-NAD(+) reductase (377 aa).

This sequence belongs to the FAD-dependent oxidoreductase family. FAD is required as a cofactor.

Its subcellular location is the cytoplasm. The catalysed reaction is 2 reduced [nitric oxide reductase rubredoxin domain] + NAD(+) + H(+) = 2 oxidized [nitric oxide reductase rubredoxin domain] + NADH. It functions in the pathway nitrogen metabolism; nitric oxide reduction. One of at least two accessory proteins for anaerobic nitric oxide (NO) reductase. Reduces the rubredoxin moiety of NO reductase. The chain is Nitric oxide reductase FlRd-NAD(+) reductase from Escherichia coli (strain 55989 / EAEC).